The chain runs to 332 residues: L-lactate dehydrogenase A chain (332 aa).

Ala2 carries the post-translational modification N-acetylalanine. The residue at position 5 (Lys5) is an N6-acetyllysine; alternate. Lys5 is modified (N6-succinyllysine; alternate). Lys14 carries the N6-acetyllysine modification. 29 to 57 is an NAD(+) binding site; sequence GAVGMACAISILMKDLADELALVDVMEDK. Position 57 is an N6-acetyllysine; alternate (Lys57). Lys57 participates in a covalent cross-link: Glycyl lysine isopeptide (Lys-Gly) (interchain with G-Cter in SUMO2); alternate. The residue at position 81 (Lys81) is an N6-acetyllysine. NAD(+) is bound at residue Arg99. Residue Arg106 coordinates substrate. Lys118 carries the post-translational modification N6-acetyllysine; alternate. Lys118 is modified (N6-succinyllysine; alternate). N6-acetyllysine is present on Lys126. Asn138 contacts NAD(+). The substrate site is built by Asn138 and Arg169. The active-site Proton acceptor is His193. N6-acetyllysine is present on residues Lys224 and Lys232. A Phosphotyrosine modification is found at Tyr239. Lys243 is subject to N6-acetyllysine. Thr248 is a binding site for substrate. Position 309 is a phosphothreonine (Thr309). Ser310 carries the post-translational modification Phosphoserine. The residue at position 318 (Lys318) is an N6-acetyllysine; alternate. N6-succinyllysine; alternate is present on Lys318. Thr322 is modified (phosphothreonine).

Belongs to the LDH/MDH superfamily. LDH family. As to quaternary structure, homotetramer. Interacts with PTEN upstream reading frame protein MP31. Post-translationally, ISGylated.

The protein localises to the cytoplasm. It catalyses the reaction (S)-lactate + NAD(+) = pyruvate + NADH + H(+). The protein operates within fermentation; pyruvate fermentation to lactate; (S)-lactate from pyruvate: step 1/1. Interconverts simultaneously and stereospecifically pyruvate and lactate with concomitant interconversion of NADH and NAD(+). This chain is L-lactate dehydrogenase A chain (LDHA), found in Oryctolagus cuniculus (Rabbit).